Reading from the N-terminus, the 348-residue chain is Probable mitochondrial adenine nucleotide transporter BTL1 (348 aa).

3 Solcar repeats span residues 46–129 (SREA…VKRA), 157–241 (SWIS…MKTS), and 251–338 (LSRP…WKDI). Helical transmembrane passes span 52 to 72 (FLSG…LETI), 104 to 124 (GNEI…GTFE), 156 to 176 (ISWI…STLV), 213 to 233 (FYAG…CYYF), 256 to 276 (MLVL…PLEV), and 321 to 341 (VMPS…ILLA).

The protein belongs to the mitochondrial carrier (TC 2.A.29) family.

The protein resides in the mitochondrion inner membrane. In terms of biological role, probable mitochondrial adenylate carrier that catalyzes the transport of ATP, ADP and AMP. The polypeptide is Probable mitochondrial adenine nucleotide transporter BTL1 (Arabidopsis thaliana (Mouse-ear cress)).